A 227-amino-acid polypeptide reads, in one-letter code: PKHD-type hydroxylase GOX0559 (227 aa).

Positions 78–178 constitute a Fe2OG dioxygenase domain; the sequence is RVYPPLFNRY…RWASFFWSQS (101 aa). Residues H96, D98, and H159 each contribute to the Fe cation site. R169 lines the 2-oxoglutarate pocket.

It depends on Fe(2+) as a cofactor. The cofactor is L-ascorbate.

This chain is PKHD-type hydroxylase GOX0559, found in Gluconobacter oxydans (strain 621H) (Gluconobacter suboxydans).